Here is a 167-residue protein sequence, read N- to C-terminus: Ubiquitin-fold modifier-conjugating enzyme 1 (167 aa).

Residue cysteine 116 is the Glycyl thioester intermediate of the active site. Lysine 122 participates in a covalent cross-link: Glycyl lysine isopeptide (Lys-Gly) (interchain with G-Cter in UFM1).

Belongs to the ubiquitin-conjugating enzyme family. UFC1 subfamily. Interacts with UBA5 (via C-terminus). Interacts with UFL1. Interacts with UFM1. Interacts with KIRREL3. Post-translationally, ufmylated at Lys-122. Deufmylated by UFSP1.

In terms of biological role, E2-like enzyme which specifically catalyzes the second step in ufmylation. Accepts the ubiquitin-like modifier UFM1 from the E1 enzyme UBA5 and forms an intermediate with UFM1 via a thioester linkage. Ufmylation is involved in various processes, such as ribosome recycling, response to DNA damage, interferon response or reticulophagy (also called ER-phagy). In Bos taurus (Bovine), this protein is Ubiquitin-fold modifier-conjugating enzyme 1.